We begin with the raw amino-acid sequence, 478 residues long: Membrane-bound lytic murein transglycosylase F (478 aa).

Positions 1 to 22 (MTRFLFAIILGFLLTACQQVTV) are cleaved as a signal peptide. The tract at residues 23-257 (EETEYVPHKL…HLNEKYFGHV (235 aa)) is non-LT domain. The interval 258-478 (KRFDYIDTRA…PGTLSPDKPK (221 aa)) is LT domain. The active site involves Glu302. The tract at residues 446–478 (SKQQNSDEEEPSDLASEDGPAPVPGTLSPDKPK) is disordered. Positions 451-461 (SDEEEPSDLAS) are enriched in acidic residues.

This sequence in the N-terminal section; belongs to the bacterial solute-binding protein 3 family. The protein in the C-terminal section; belongs to the transglycosylase Slt family.

It localises to the cell outer membrane. It carries out the reaction Exolytic cleavage of the (1-&gt;4)-beta-glycosidic linkage between N-acetylmuramic acid (MurNAc) and N-acetylglucosamine (GlcNAc) residues in peptidoglycan, from either the reducing or the non-reducing ends of the peptidoglycan chains, with concomitant formation of a 1,6-anhydrobond in the MurNAc residue.. Murein-degrading enzyme that degrades murein glycan strands and insoluble, high-molecular weight murein sacculi, with the concomitant formation of a 1,6-anhydromuramoyl product. Lytic transglycosylases (LTs) play an integral role in the metabolism of the peptidoglycan (PG) sacculus. Their lytic action creates space within the PG sacculus to allow for its expansion as well as for the insertion of various structures such as secretion systems and flagella. The chain is Membrane-bound lytic murein transglycosylase F from Shewanella sp. (strain MR-4).